The following is a 319-amino-acid chain: Protease HtpX homolog (319 aa).

2 helical membrane-spanning segments follow: residues 3 to 23 (LTVLALIGGYIVVLGVAAWAL) and 32 to 52 (TGVAFMLSLLALAMVLVQWLF). H134 contacts Zn(2+). Residue E135 is part of the active site. H138 contacts Zn(2+). 2 helical membrane passes run 146–166 (VILALSLIPIAAFLIGRTLVW) and 182–202 (MALVAVGAALLAAGMVFQLIV). E210 serves as a coordination point for Zn(2+).

It belongs to the peptidase M48B family. It depends on Zn(2+) as a cofactor.

It is found in the cell membrane. The polypeptide is Protease HtpX homolog (Aeropyrum pernix (strain ATCC 700893 / DSM 11879 / JCM 9820 / NBRC 100138 / K1)).